A 244-amino-acid polypeptide reads, in one-letter code: NAD(P)H-quinone oxidoreductase subunit K (244 aa).

[4Fe-4S] cluster is bound by residues Cys60, Cys61, Cys125, and Cys156.

This sequence belongs to the complex I 20 kDa subunit family. As to quaternary structure, NDH-1 can be composed of about 15 different subunits; different subcomplexes with different compositions have been identified which probably have different functions. Requires [4Fe-4S] cluster as cofactor.

Its subcellular location is the cellular thylakoid membrane. It carries out the reaction a plastoquinone + NADH + (n+1) H(+)(in) = a plastoquinol + NAD(+) + n H(+)(out). The enzyme catalyses a plastoquinone + NADPH + (n+1) H(+)(in) = a plastoquinol + NADP(+) + n H(+)(out). In terms of biological role, NDH-1 shuttles electrons from an unknown electron donor, via FMN and iron-sulfur (Fe-S) centers, to quinones in the respiratory and/or the photosynthetic chain. The immediate electron acceptor for the enzyme in this species is believed to be plastoquinone. Couples the redox reaction to proton translocation, and thus conserves the redox energy in a proton gradient. Cyanobacterial NDH-1 also plays a role in inorganic carbon-concentration. This is NAD(P)H-quinone oxidoreductase subunit K from Prochlorococcus marinus (strain MIT 9515).